The primary structure comprises 290 residues: Nucleoid occlusion protein (290 aa).

The H-T-H motif DNA-binding region spans Glu-153 to Leu-172.

It belongs to the ParB family.

The protein localises to the cytoplasm. The protein resides in the nucleoid. Its function is as follows. Effects nucleoid occlusion by binding relatively nonspecifically to DNA and preventing the assembly of the division machinery in the vicinity of the nucleoid, especially under conditions that disturb the cell cycle. It helps to coordinate cell division and chromosome segregation by preventing the formation of the Z ring through the nucleoid, which would cause chromosome breakage. The sequence is that of Nucleoid occlusion protein from Bacillus cereus (strain ATCC 10987 / NRS 248).